A 344-amino-acid polypeptide reads, in one-letter code: D-beta-hydroxybutyrate dehydrogenase, mitochondrial (344 aa).

Residues 1-46 (MLTARLSRPLSQLPRKTLNFSDRENGTRGSLLLYSAPFVPVGRRTY) constitute a mitochondrion transit peptide. Residue 59–83 (LITGCDSGFGFSLAKHLHSEGFLVF) participates in NAD(+) binding. Residues lysine 73 and lysine 97 each carry the N6-acetyllysine modification. Lysine 103 carries the post-translational modification N6-acetyllysine; alternate. N6-succinyllysine; alternate is present on lysine 103. At lysine 177 the chain carries N6-acetyllysine. Serine 195 contributes to the substrate binding site. Residue tyrosine 208 is the Proton acceptor of the active site. Position 212 is an N6-acetyllysine (lysine 212). The O-linked (GlcNAc) serine glycan is linked to serine 219. Serine 246 bears the Phosphoserine mark. An N6-acetyllysine; alternate modification is found at lysine 260. Lysine 260 is modified (N6-succinyllysine; alternate). At lysine 281 the chain carries N6-acetyllysine.

Belongs to the short-chain dehydrogenases/reductases (SDR) family. As to quaternary structure, homotetramer.

The protein resides in the mitochondrion inner membrane. The protein localises to the mitochondrion matrix. The catalysed reaction is (R)-3-hydroxybutanoate + NAD(+) = acetoacetate + NADH + H(+). With respect to regulation, requires phosphatidylcholine as an allosteric activator for enzymatic activity. The sequence is that of D-beta-hydroxybutyrate dehydrogenase, mitochondrial from Bos taurus (Bovine).